The primary structure comprises 258 residues: Imidazole glycerol phosphate synthase subunit HisF (258 aa).

Active-site residues include Asp11 and Asp130.

This sequence belongs to the HisA/HisF family. As to quaternary structure, heterodimer of HisH and HisF.

The protein resides in the cytoplasm. It carries out the reaction 5-[(5-phospho-1-deoxy-D-ribulos-1-ylimino)methylamino]-1-(5-phospho-beta-D-ribosyl)imidazole-4-carboxamide + L-glutamine = D-erythro-1-(imidazol-4-yl)glycerol 3-phosphate + 5-amino-1-(5-phospho-beta-D-ribosyl)imidazole-4-carboxamide + L-glutamate + H(+). It participates in amino-acid biosynthesis; L-histidine biosynthesis; L-histidine from 5-phospho-alpha-D-ribose 1-diphosphate: step 5/9. Functionally, IGPS catalyzes the conversion of PRFAR and glutamine to IGP, AICAR and glutamate. The HisF subunit catalyzes the cyclization activity that produces IGP and AICAR from PRFAR using the ammonia provided by the HisH subunit. The polypeptide is Imidazole glycerol phosphate synthase subunit HisF (Yersinia pseudotuberculosis serotype O:1b (strain IP 31758)).